We begin with the raw amino-acid sequence, 679 residues long: NADPH--cytochrome P450 reductase (679 aa).

The Lumenal portion of the chain corresponds to 1 to 21; it reads MASEQTIDGAAAIPSGGGDEP. Residues 22–42 traverse the membrane as a helical segment; the sequence is FLGLLDVALLAVLIGGAAFYF. The Cytoplasmic portion of the chain corresponds to 43-679; that stretch reads LRSRKKEEEP…QKRYSADVWS (637 aa). Residues 84–228 enclose the Flavodoxin-like domain; sequence LVVFYGSQTG…DFITWKDRFW (145 aa). Residues 90–95, 142–145, 177–186, and D212 each bind FMN; these read SQTGTG, ATYG, and LGNKTYEHYN. Residues 283–523 enclose the FAD-binding FR-type domain; it reads KNPFLAPIKV…FIRKSQFRLP (241 aa). R302 serves as a coordination point for NADP(+). FAD is bound by residues 458–461, 476–478, Y482, and 492–495; these read RYYS, TAV, and GVAT. NADP(+) is bound by residues T537, 597-598, 603-607, and D640; these read SR and KVYVQ. W678 contacts FAD.

The protein belongs to the NADPH--cytochrome P450 reductase family. This sequence in the N-terminal section; belongs to the flavodoxin family. In the C-terminal section; belongs to the flavoprotein pyridine nucleotide cytochrome reductase family. Interacts with sturkopf. Requires FAD as cofactor. The cofactor is FMN. High in antennae.

It localises to the endoplasmic reticulum membrane. The catalysed reaction is 2 oxidized [cytochrome P450] + NADPH = 2 reduced [cytochrome P450] + NADP(+) + H(+). Functionally, this enzyme is required for electron transfer from NADP to cytochrome p450 in microsomes. It can also provide electron transfer to heme oxygenase and cytochrome b5. May function to clear the olfactory organ (antennae) from accumulating chemicals. The sequence is that of NADPH--cytochrome P450 reductase (Cpr) from Drosophila melanogaster (Fruit fly).